We begin with the raw amino-acid sequence, 483 residues long: Fructose-like PTS system EIIBC component (483 aa).

Residues Met1–Thr105 enclose the PTS EIIB type-2 domain. Catalysis depends on Cys13, which acts as the Phosphocysteine intermediate; for EIIB activity. The residue at position 13 (Cys13) is a Phosphocysteine; by EIIA. One can recognise a PTS EIIC type-2 domain in the interval Val128–Ala475. The next 10 membrane-spanning stretches (helical) occupy residues Leu132–Leu152, Ile180–Ile200, Pro204–Thr224, Gly227–Phe247, Leu264–Val284, Met303–Ile323, Ala344–Ala364, Ile380–Leu400, Met402–Ile422, and Val442–Val462.

The protein localises to the cell inner membrane. The enzyme catalyses D-fructose(out) + N(pros)-phospho-L-histidyl-[protein] = D-fructose 1-phosphate(in) + L-histidyl-[protein]. Functionally, the phosphoenolpyruvate-dependent sugar phosphotransferase system (sugar PTS), a major carbohydrate active transport system, catalyzes the phosphorylation of incoming sugar substrates concomitantly with their translocation across the cell membrane. The enzyme II FrvAB PTS system is involved in fructose transport. This chain is Fructose-like PTS system EIIBC component, found in Escherichia coli (strain K12).